The chain runs to 153 residues: METQRASLCLGRWSLWLLLLGLVVPSASAQALSYREAVLRAVDRLNEQSSEANLYRLLELDQPPKADEDPGTPKPVSFTVKETVCPRPTRQPPELCDFKENGRVKQCVGTVTLKEIRGNFDITCNQLQSVRIIDLLWRVRRPQKPKFVTVWVR.

The N-terminal stretch at 1–29 (METQRASLCLGRWSLWLLLLGLVVPSASA) is a signal peptide. At glutamine 30 the chain carries Pyrrolidone carboxylic acid. The propeptide occupies 30 to 130 (QALSYREAVL…DITCNQLQSV (101 aa)). The tract at residues 61–80 (DQPPKADEDPGTPKPVSFTV) is disordered. Disulfide bonds link cysteine 85–cysteine 96 and cysteine 107–cysteine 124.

This sequence belongs to the cathelicidin family.

It localises to the secreted. Functionally, exerts antimicrobial activity against both Gram-positive and negative bacteria at concentrations of 2-16 micro molar. Its activity appears to be mediated by its ability to damage bacterial membranes. The chain is Antibacterial peptide PMAP-23 (PMAP23) from Sus scrofa (Pig).